A 795-amino-acid polypeptide reads, in one-letter code: ATP-dependent RNA helicase DHX15 (795 aa).

The tract at residues 1–111 (MSKRHRLDLG…HTGHTGHTSL (111 aa)) is disordered. Ser15 carries the post-translational modification Phosphoserine. Positions 20 to 62 (AGTDGKDRERDRDREDRSKDRDRERDRGDREREREKEKEKELR) are enriched in basic and acidic residues. Positions 79 to 110 (ASHSAHSTHSAHSTHSTHSAHSTHTGHTGHTS) are enriched in low complexity. The Helicase ATP-binding domain occupies 147–313 (TDILVRHQSF…FDNCPLLTIP (167 aa)). 160–167 (GETGSGKT) provides a ligand contact to ATP. A DEAH box motif is present at residues 260-263 (DEAH). Residues 338–518 (TVIQIHMCEE…SVVLQLKKLG (181 aa)) form the Helicase C-terminal domain. Lys488 carries the post-translational modification N6-acetyllysine. Lys786 participates in a covalent cross-link: Glycyl lysine isopeptide (Lys-Gly) (interchain with G-Cter in SUMO2).

Belongs to the DEAD box helicase family. DEAH subfamily. DDX15/PRP43 sub-subfamily. Component of the U11/U12 snRNPs that are part of the U12-type spliceosome. Identified in the Intron Large spliceosome complex (IL, also named intron lariat spliceosome), a post-mRNA release spliceosomal complex containing the excised intron, U2, U5 and U6 snRNPs, and splicing factors; the association may be transient. The IL complex exists in two distinct conformations, one with the DHX15 (ILS2) and one without (ILS1). Interacts with TFIP11 (via G-patch domain); indicative for a recruitment to the IL complex. Interacts with SSB/La. Interacts with GPATCH2 (via G-patch domain); promoting the RNA helicase activity. Interacts with NKRF (via G-patch domain); promoting the RNA helicase activity. Interacts with NLRP6. Ubiquitous.

The protein localises to the nucleus. The protein resides in the nucleolus. The catalysed reaction is ATP + H2O = ADP + phosphate + H(+). With respect to regulation, ATPase activity is enhanced upon binding to G-patch domain-containing proteins. G-patch domain-containing proteins act like a brace that tethers mobile sections of DHX15 together, stabilizing a functional conformation with high RNA affinity, thereby promoting the ATPase activity. In terms of biological role, RNA helicase involved in mRNA processing and antiviral innate immunity. Pre-mRNA processing factor involved in disassembly of spliceosomes after the release of mature mRNA. In cooperation with TFIP11 seem to be involved in the transition of the U2, U5 and U6 snRNP-containing IL complex to the snRNP-free IS complex leading to efficient debranching and turnover of excised introns. Plays a key role in antiviral innate immunity by promoting both MAVS-dependent signaling and NLRP6 inflammasome. Acts as an RNA virus sensor: recognizes and binds viral double stranded RNA (dsRNA) and activates the MAVS-dependent signaling to produce interferon-beta and interferon lambda-3 (IFNL3). Involved in intestinal antiviral innate immunity together with NLRP6: recognizes and binds viral dsRNA and promotes activation of the NLRP6 inflammasome in intestinal epithelial cells to restrict infection by enteric viruses. The NLRP6 inflammasome acts by promoting maturation and secretion of IL18 in the extracellular milieu. Also involved in antibacterial innate immunity by promoting Wnt-induced antimicrobial protein expression in Paneth cells. This Mus musculus (Mouse) protein is ATP-dependent RNA helicase DHX15.